The following is a 359-amino-acid chain: UDP-3-O-acylglucosamine N-acyltransferase (359 aa).

H253 acts as the Proton acceptor in catalysis.

This sequence belongs to the transferase hexapeptide repeat family. LpxD subfamily. As to quaternary structure, homotrimer.

The enzyme catalyses a UDP-3-O-[(3R)-3-hydroxyacyl]-alpha-D-glucosamine + a (3R)-hydroxyacyl-[ACP] = a UDP-2-N,3-O-bis[(3R)-3-hydroxyacyl]-alpha-D-glucosamine + holo-[ACP] + H(+). The protein operates within bacterial outer membrane biogenesis; LPS lipid A biosynthesis. Its function is as follows. Catalyzes the N-acylation of UDP-3-O-acylglucosamine using 3-hydroxyacyl-ACP as the acyl donor. Is involved in the biosynthesis of lipid A, a phosphorylated glycolipid that anchors the lipopolysaccharide to the outer membrane of the cell. This is UDP-3-O-acylglucosamine N-acyltransferase from Burkholderia lata (strain ATCC 17760 / DSM 23089 / LMG 22485 / NCIMB 9086 / R18194 / 383).